We begin with the raw amino-acid sequence, 83 residues long: Apolipoprotein C-I (83 aa).

Positions 1–26 (MRLILSLPVLAVVLAMVLEGPAPAQA) are cleaved as a signal peptide.

This sequence belongs to the apolipoprotein C1 family.

The protein localises to the secreted. In terms of biological role, inhibitor of lipoprotein binding to the low density lipoprotein (LDL) receptor, LDL receptor-related protein, and very low density lipoprotein (VLDL) receptor. Associates with high density lipoproteins (HDL) and the triacylglycerol-rich lipoproteins in the plasma and makes up about 10% of the protein of the VLDL and 2% of that of HDL. Appears to interfere directly with fatty acid uptake and is also the major plasma inhibitor of cholesteryl ester transfer protein (CETP). Binds free fatty acids and reduces their intracellular esterification. Modulates the interaction of APOE with beta-migrating VLDL and inhibits binding of beta-VLDL to the LDL receptor-related protein. In Rousettus aegyptiacus (Egyptian fruit bat), this protein is Apolipoprotein C-I (APOC1).